The following is a 469-amino-acid chain: Ufm1-specific protease 2 (469 aa).

M1 is modified (N-acetylmethionine). Active-site residues include C302, D426, and H428.

Belongs to the peptidase C78 family.

It is found in the endoplasmic reticulum. The protein resides in the cytoplasm. The protein localises to the nucleus. Its function is as follows. Thiol-dependent isopeptidase that specifically cleaves UFM1, a ubiquitin-like modifier protein, from conjugated proteins, such as CD274/PD-L1, CYB5R3, DDRGK1, MRE11, RPL26/uL24, TRIP4 and RPL26/uL24. While it is also able to mediate the processing of UFM1 precursors, a prerequisite for conjugation reactions, UFSP2 mainly acts as a protein deUFMylase that mediates deconjugation of UFM1 from target proteins. Mediates deUFMylation of RPL26/uL24, a critical step to release the UFM1 ribosome E3 ligase (UREL) complex during the recycling of 60S ribosome subunits from the endoplasmic reticulum. Catalyzes deUFMylation of TRIP4, regulating intracellular nuclear receptors transactivation and thereby regulate cell proliferation and differentiation. The polypeptide is Ufm1-specific protease 2 (Pongo abelii (Sumatran orangutan)).